A 386-amino-acid polypeptide reads, in one-letter code: 4-hydroxy-3-methylbut-2-en-1-yl diphosphate synthase (flavodoxin) (386 aa).

[4Fe-4S] cluster-binding residues include Cys281, Cys284, Cys316, and Glu323.

The protein belongs to the IspG family. [4Fe-4S] cluster is required as a cofactor.

It carries out the reaction (2E)-4-hydroxy-3-methylbut-2-enyl diphosphate + oxidized [flavodoxin] + H2O + 2 H(+) = 2-C-methyl-D-erythritol 2,4-cyclic diphosphate + reduced [flavodoxin]. Its pathway is isoprenoid biosynthesis; isopentenyl diphosphate biosynthesis via DXP pathway; isopentenyl diphosphate from 1-deoxy-D-xylulose 5-phosphate: step 5/6. Functionally, converts 2C-methyl-D-erythritol 2,4-cyclodiphosphate (ME-2,4cPP) into 1-hydroxy-2-methyl-2-(E)-butenyl 4-diphosphate. The chain is 4-hydroxy-3-methylbut-2-en-1-yl diphosphate synthase (flavodoxin) from Corynebacterium jeikeium (strain K411).